The following is a 66-amino-acid chain: MSGKKSGLPDGRVPDRNPDGTPAVPWKSRWTEGPLPLWLVATAGGMAVMFVVGLFFYGSYVGVGSA.

The tract at residues 1–27 (MSGKKSGLPDGRVPDRNPDGTPAVPWK) is disordered. A helical transmembrane segment spans residues 37–57 (LWLVATAGGMAVMFVVGLFFY).

The protein belongs to the PsbJ family. In terms of assembly, PSII is composed of 1 copy each of membrane proteins PsbA, PsbB, PsbC, PsbD, PsbE, PsbF, PsbH, PsbI, PsbJ, PsbK, PsbL, PsbM, PsbT, PsbX, PsbY, PsbZ, Psb30/Ycf12, peripheral proteins PsbO, CyanoQ (PsbQ), PsbU, PsbV and a large number of cofactors. It forms dimeric complexes.

It is found in the cellular thylakoid membrane. Its function is as follows. One of the components of the core complex of photosystem II (PSII). PSII is a light-driven water:plastoquinone oxidoreductase that uses light energy to abstract electrons from H(2)O, generating O(2) and a proton gradient subsequently used for ATP formation. It consists of a core antenna complex that captures photons, and an electron transfer chain that converts photonic excitation into a charge separation. The polypeptide is Photosystem II reaction center protein J (Synechococcus sp. (strain RCC307)).